The chain runs to 326 residues: Cathepsin L-like proteinase (326 aa).

The first 15 residues, 1-15, serve as a signal peptide directing secretion; it reads MRLFILAVLTVGVLG. A propeptide spans 16 to 106 (activation peptide); that stretch reads SNDDLWHQWK…HGVPYEANNR (91 aa). Pro109 is modified (3-hydroxyproline; partial). 3 disulfides stabilise this stretch: Cys129-Cys172, Cys163-Cys204, and Cys262-Cys311. The active site involves Cys132. Pro196 is modified (3-hydroxyproline; partial). Residues His269 and Asn289 contribute to the active site.

This sequence belongs to the peptidase C1 family. In terms of assembly, monomer. Contains cysteine residues involved in intramolecular disulfide bonding.

The protein resides in the secreted. Its activity is regulated as follows. Strongly inhibited by Antipain, E64 and Leupeptin, and weakly inhibited by iodoacetic acid (IAA) and phenylmethylsulfonyl fluoride (PMSF). Requires the presence of dithiothreitol (DTT) for activity. Its function is as follows. Thiol protease. Probably involved in interaction with host tissues. Displays a similar activity to that of papain. Has high activity on Z-Phe-Arg-NHMec, but no activity on Z-Arg-NHMec. This is Cathepsin L-like proteinase from Fasciola hepatica (Liver fluke).